Reading from the N-terminus, the 73-residue chain is Translation initiation factor IF-1 3 (73 aa).

In terms of domain architecture, S1-like spans 1 to 72; that stretch reads MAKEELVEFG…TKGRINYRHK (72 aa).

Belongs to the IF-1 family. Component of the 30S ribosomal translation pre-initiation complex which assembles on the 30S ribosome in the order IF-2 and IF-3, IF-1 and N-formylmethionyl-tRNA(fMet); mRNA recruitment can occur at any time during PIC assembly.

It is found in the cytoplasm. In terms of biological role, one of the essential components for the initiation of protein synthesis. Stabilizes the binding of IF-2 and IF-3 on the 30S subunit to which N-formylmethionyl-tRNA(fMet) subsequently binds. Helps modulate mRNA selection, yielding the 30S pre-initiation complex (PIC). Upon addition of the 50S ribosomal subunit IF-1, IF-2 and IF-3 are released leaving the mature 70S translation initiation complex. This Cupriavidus metallidurans (strain ATCC 43123 / DSM 2839 / NBRC 102507 / CH34) (Ralstonia metallidurans) protein is Translation initiation factor IF-1 3.